We begin with the raw amino-acid sequence, 798 residues long: Neuroligin-1 (798 aa).

Residues Met1–Ser17 form the signal peptide. Over Tyr18 to Leu685 the chain is Extracellular. The cysteines at positions 86 and 125 are disulfide-linked. N-linked (GlcNAc...) asparagine glycans are attached at residues Asn164, Asn292, and Asn315. Cys288 and Cys307 are oxidised to a cystine. Residues Ala636–Ala676 are disordered. Pro residues predominate over residues Pro639–Glu652. Residues Leu653 to Thr665 are compositionally biased toward low complexity. Residues Gly686 to Val706 form a helical membrane-spanning segment. Over Arg707–Val798 the chain is Cytoplasmic. The disordered stretch occupies residues His731 to Pro765.

It belongs to the type-B carboxylesterase/lipase family. Interacts (via extracellular domain) with isoform b of madd-4; the interaction is required for the localization to postsynaptic domains. Interacts with unc-49.

Its subcellular location is the cell membrane. It localises to the synapse. In terms of biological role, probable neuronal cell surface protein thought to be involved in cell-cell-interactions by forming intercellular junctions through binding to beta-neurexins. Plays a role in the clustering of the GABA(A) receptor unc-49 at postsynaptic sites in neuromuscular junctions (NMJs) via the interaction with madd-4 and neurexin nrx-1 and is thereby required for normal GABAergic synaptic transmission. The polypeptide is Neuroligin-1 (nlg-1) (Caenorhabditis elegans).